The following is a 175-amino-acid chain: Large ribosomal subunit protein uL10 (175 aa).

The protein belongs to the universal ribosomal protein uL10 family. Part of the ribosomal stalk of the 50S ribosomal subunit. The N-terminus interacts with L11 and the large rRNA to form the base of the stalk. The C-terminus forms an elongated spine to which L12 dimers bind in a sequential fashion forming a multimeric L10(L12)X complex.

Functionally, forms part of the ribosomal stalk, playing a central role in the interaction of the ribosome with GTP-bound translation factors. This is Large ribosomal subunit protein uL10 from Prochlorococcus marinus (strain AS9601).